Reading from the N-terminus, the 160-residue chain is Major pollen allergen Car b 1 isoforms 1A and 1B (160 aa).

Belongs to the BetVI family.

This is Major pollen allergen Car b 1 isoforms 1A and 1B from Carpinus betulus (European hornbeam).